The primary structure comprises 273 residues: Transmembrane protein 202 (273 aa).

4 consecutive transmembrane segments (helical) span residues 53–75 (HIYI…IAMS), 121–141 (FFLI…SSWI), 155–175 (VSML…LFVA), and 189–209 (LLWT…AGII). The interval 242–273 (TTVSPAKDEGPRSEMESLSVREKNLPKSGLWW) is disordered. The segment covering 247-266 (AKDEGPRSEMESLSVREKNL) has biased composition (basic and acidic residues).

The protein localises to the membrane. The sequence is that of Transmembrane protein 202 (TMEM202) from Homo sapiens (Human).